We begin with the raw amino-acid sequence, 287 residues long: Light-independent protochlorophyllide reductase iron-sulfur ATP-binding protein (287 aa).

Residues 10-15 (GIGKST) and lysine 39 each bind ATP. Mg(2+) is bound at residue serine 14. [4Fe-4S] cluster is bound by residues cysteine 95 and cysteine 129. Position 180-181 (180-181 (NR)) interacts with ATP.

It belongs to the NifH/BchL/ChlL family. As to quaternary structure, homodimer. Protochlorophyllide reductase is composed of three subunits; ChlL, ChlN and ChlB. The cofactor is [4Fe-4S] cluster.

Its subcellular location is the plastid. The protein localises to the chloroplast. It carries out the reaction chlorophyllide a + oxidized 2[4Fe-4S]-[ferredoxin] + 2 ADP + 2 phosphate = protochlorophyllide a + reduced 2[4Fe-4S]-[ferredoxin] + 2 ATP + 2 H2O. Its pathway is porphyrin-containing compound metabolism; chlorophyll biosynthesis (light-independent). In terms of biological role, component of the dark-operative protochlorophyllide reductase (DPOR) that uses Mg-ATP and reduced ferredoxin to reduce ring D of protochlorophyllide (Pchlide) to form chlorophyllide a (Chlide). This reaction is light-independent. The L component serves as a unique electron donor to the NB-component of the complex, and binds Mg-ATP. This Nephroselmis olivacea (Green alga) protein is Light-independent protochlorophyllide reductase iron-sulfur ATP-binding protein.